A 92-amino-acid polypeptide reads, in one-letter code: MEIKILKSERNYLELEIEGEDHTLGNLIAGTLRKISGVSFASYYQPHPLTDKIIVKILTDGSIAPKDALLKAIETVRVMASHYIDEIKGLSK.

Belongs to the archaeal Rpo11/eukaryotic RPB11/RPC19 RNA polymerase subunit family. As to quaternary structure, part of the RNA polymerase complex.

It is found in the cytoplasm. It catalyses the reaction RNA(n) + a ribonucleoside 5'-triphosphate = RNA(n+1) + diphosphate. Its function is as follows. DNA-dependent RNA polymerase (RNAP) catalyzes the transcription of DNA into RNA using the four ribonucleoside triphosphates as substrates. In Saccharolobus islandicus (strain Y.N.15.51 / Yellowstone #2) (Sulfolobus islandicus), this protein is DNA-directed RNA polymerase subunit Rpo11.